Reading from the N-terminus, the 509-residue chain is Maturase K (509 aa).

Belongs to the intron maturase 2 family. MatK subfamily.

It localises to the plastid. The protein resides in the chloroplast. Functionally, usually encoded in the trnK tRNA gene intron. Probably assists in splicing its own and other chloroplast group II introns. This is Maturase K from Solanum bulbocastanum (Wild potato).